We begin with the raw amino-acid sequence, 364 residues long: tRNA 2-selenouridine synthase (364 aa).

The 124-residue stretch at 14-137 (LLADTPLIDV…LRQTAIQATW (124 aa)) folds into the Rhodanese domain. Cys-97 serves as the catalytic S-selanylcysteine intermediate.

This sequence belongs to the SelU family. As to quaternary structure, monomer.

The catalysed reaction is 5-methylaminomethyl-2-thiouridine(34) in tRNA + selenophosphate + (2E)-geranyl diphosphate + H2O + H(+) = 5-methylaminomethyl-2-selenouridine(34) in tRNA + (2E)-thiogeraniol + phosphate + diphosphate. It catalyses the reaction 5-methylaminomethyl-2-thiouridine(34) in tRNA + (2E)-geranyl diphosphate = 5-methylaminomethyl-S-(2E)-geranyl-thiouridine(34) in tRNA + diphosphate. It carries out the reaction 5-methylaminomethyl-S-(2E)-geranyl-thiouridine(34) in tRNA + selenophosphate + H(+) = 5-methylaminomethyl-2-(Se-phospho)selenouridine(34) in tRNA + (2E)-thiogeraniol. The enzyme catalyses 5-methylaminomethyl-2-(Se-phospho)selenouridine(34) in tRNA + H2O = 5-methylaminomethyl-2-selenouridine(34) in tRNA + phosphate. In terms of biological role, involved in the post-transcriptional modification of the uridine at the wobble position (U34) of tRNA(Lys), tRNA(Glu) and tRNA(Gln). Catalyzes the conversion of 2-thiouridine (S2U-RNA) to 2-selenouridine (Se2U-RNA). Acts in a two-step process involving geranylation of 2-thiouridine (S2U) to S-geranyl-2-thiouridine (geS2U) and subsequent selenation of the latter derivative to 2-selenouridine (Se2U) in the tRNA chain. The chain is tRNA 2-selenouridine synthase from Salmonella enteritidis PT4 (strain P125109).